A 407-amino-acid polypeptide reads, in one-letter code: uncharacterized protein (407 aa).

11 consecutive transmembrane segments (helical) span residues 13–30 (IVFT…SPFL), 40–62 (VTPL…YYVL), 67–89 (ILGM…YNII), 118–140 (LAFA…VFSG), 147–169 (VYER…IRRL), 179–199 (AVGL…YYNY), 253–271 (WISG…SVFV), 281–303 (TEII…FGPL), 334–356 (GYLI…EIIA), 361–378 (AFAF…LVSF), and 385–402 (QFLV…IVLF).

Its subcellular location is the cell membrane. This is an uncharacterized protein from Aquifex aeolicus (strain VF5).